The sequence spans 21 residues: Alpha-fibrinogenase A1 (21 aa).

It belongs to the peptidase S1 family. Snake venom subfamily. In terms of assembly, monomer. Expressed by the venom gland.

The protein resides in the secreted. With respect to regulation, inhibited by PMSF, bovine aprotinin (APR), and soybean trypsin inhibitor (STI). Is not inhibited by EDTA, beta-mercaptoethanol, and high temperature (85 degrees Celsius). Snake venom serine protease that completely cleaves fibrinogen Aalpha chain (FGA), partially cleaves Bbeta chain (FGB) and has no activity on gamma chain. Is more potent that A2 and A3 alpha-fibrinogenases. Very active within 5 minutes. This chain is Alpha-fibrinogenase A1, found in Crotalus atrox (Western diamondback rattlesnake).